Reading from the N-terminus, the 272-residue chain is PFNPETVYALLAMLISFFVLLASARKENSDEGISFNFTNFTRGDQGVTLLGQANIMANGILALTNHTNPTWNTGRALYSKPVPIWDSATGNVASFVTSFSFVVQEIKGAIPADGIVFFLAPEARIPDNSAGGQLGIVNANKAYNPFVGVEFDTYSNNWDPKSAHIGIDASSLISLRTVKWNKVSGSLVKVSIIYDSLSKTLSVVVTHENGQISTIAQVVDLKAVLGEKVRVGFTAATTTGRELYDIHAWSFTSTLVTATSSTSKNMNIASYA.

Positions 1 to 29 (PFNPETVYALLAMLISFFVLLASARKENS) are cleaved as a signal peptide. N-linked (GlcNAc...) asparagine glycans are attached at residues Asn-36, Asn-39, and Asn-65. Residues Glu-150 and Asp-152 each coordinate Mn(2+). 4 residues coordinate Ca(2+): Asp-152, Tyr-154, Asn-156, and Asp-159. 2 residues coordinate Mn(2+): Asp-159 and His-164.

The protein belongs to the leguminous lectin family. In terms of assembly, homotetramer. Weak expression in bark. The lectin accumulates in the inner bark in autumn.

Bark lectins are storage proteins that probably maintain stocks of nitrogen during dormant period. Self-aggregatable molecules that can bind their own carbohydrate side chains. They could also play a role in the plant's defense against phytophagous invertebrates or herbivorous higher animals. The sequence is that of Putative bark agglutinin LECRPA3 from Robinia pseudoacacia (Black locust).